The primary structure comprises 488 residues: Ribulose bisphosphate carboxylase large chain (488 aa).

2 residues coordinate substrate: N127 and T177. Catalysis depends on K179, which acts as the Proton acceptor. Position 181 (K181) interacts with substrate. Mg(2+) contacts are provided by K205, D207, and E208. An N6-carboxylysine modification is found at K205. The Proton acceptor role is filled by H297. Substrate is bound by residues R298, H330, and S382.

This sequence belongs to the RuBisCO large chain family. Type I subfamily. Heterohexadecamer of 8 large chains and 8 small chains. It depends on Mg(2+) as a cofactor.

The protein resides in the plastid. It localises to the chloroplast. It carries out the reaction 2 (2R)-3-phosphoglycerate + 2 H(+) = D-ribulose 1,5-bisphosphate + CO2 + H2O. It catalyses the reaction D-ribulose 1,5-bisphosphate + O2 = 2-phosphoglycolate + (2R)-3-phosphoglycerate + 2 H(+). Functionally, ruBisCO catalyzes two reactions: the carboxylation of D-ribulose 1,5-bisphosphate, the primary event in carbon dioxide fixation, as well as the oxidative fragmentation of the pentose substrate in the photorespiration process. Both reactions occur simultaneously and in competition at the same active site. This Emiliania huxleyi (Coccolithophore) protein is Ribulose bisphosphate carboxylase large chain.